Here is a 241-residue protein sequence, read N- to C-terminus: Pyridoxal phosphate phosphatase PHOSPHO2 (241 aa).

The active-site Nucleophile is Asp8. Mg(2+)-binding residues include Asp8 and Asp10. The Proton donor role is filled by Asp10. Substrate is bound by residues Asp19 and Asp99. Asp179 lines the Mg(2+) pocket.

The protein belongs to the HAD-like hydrolase superfamily. PHOSPHO family. It depends on Mg(2+) as a cofactor.

It catalyses the reaction pyridoxal 5'-phosphate + H2O = pyridoxal + phosphate. Functionally, phosphatase that has high activity toward pyridoxal 5'-phosphate (PLP). Also active at much lower level toward pyrophosphate, phosphoethanolamine (PEA), phosphocholine (PCho), phospho-l-tyrosine, fructose-6-phosphate, p-nitrophenyl phosphate, and h-glycerophosphate. In Mus musculus (Mouse), this protein is Pyridoxal phosphate phosphatase PHOSPHO2 (Phospho2).